A 256-amino-acid polypeptide reads, in one-letter code: Ribosomal RNA small subunit methyltransferase A (256 aa).

S-adenosyl-L-methionine-binding residues include H12, L14, G39, E60, D83, and N101.

Belongs to the class I-like SAM-binding methyltransferase superfamily. rRNA adenine N(6)-methyltransferase family. RsmA subfamily.

The protein resides in the cytoplasm. It catalyses the reaction adenosine(1518)/adenosine(1519) in 16S rRNA + 4 S-adenosyl-L-methionine = N(6)-dimethyladenosine(1518)/N(6)-dimethyladenosine(1519) in 16S rRNA + 4 S-adenosyl-L-homocysteine + 4 H(+). In terms of biological role, specifically dimethylates two adjacent adenosines (A1518 and A1519) in the loop of a conserved hairpin near the 3'-end of 16S rRNA in the 30S particle. May play a critical role in biogenesis of 30S subunits. This is Ribosomal RNA small subunit methyltransferase A from Nitrosomonas eutropha (strain DSM 101675 / C91 / Nm57).